The primary structure comprises 285 residues: MKVTVGPDPSLVYRPDVDPEVAKDKASFRNYTSGPLLDRVFTTYKLMHTHQTVDFVRSKHAQFGGFSYKKMTVMEAVDLLDGLVDESDPDVDFPNSFHAFQTAEGIRKAHPDKDWFHLVGLLHDLGKVLALFGEPQWAVVGDTFPVGCRPQASVVFCDSTFQDNPDLQDPRYSTELGMYQPHCGLDRVLMSWGHDEYMYQVMKFNKFSLPPEAFYMIRFHSFYPWHTGRDYQQLCSQQDLAMLPWVREFNKFDLYTKCPDLPDVDKLRPYYQGLIDKYCPGILSW.

Residue arginine 29 participates in substrate binding. Serine 33 is modified (phosphoserine). 85-87 (DES) provides a ligand contact to substrate. Residues histidine 98, histidine 123, and aspartate 124 each contribute to the Fe cation site. Substrate contacts are provided by residues lysine 127 and 141-142 (GD). Residues histidine 194, histidine 220, and aspartate 253 each coordinate Fe cation. 220 to 221 (HS) lines the substrate pocket.

The protein belongs to the myo-inositol oxygenase family. Fe cation serves as cofactor. In terms of tissue distribution, kidney specific.

It is found in the cytoplasm. The enzyme catalyses myo-inositol + O2 = D-glucuronate + H2O + H(+). Its pathway is polyol metabolism; myo-inositol degradation into D-glucuronate; D-glucuronate from myo-inositol: step 1/1. The chain is Inositol oxygenase (MIOX) from Homo sapiens (Human).